The following is a 212-amino-acid chain: Protein-L-isoaspartate O-methyltransferase 1 (212 aa).

The active site involves Ser60.

This sequence belongs to the methyltransferase superfamily. L-isoaspartyl/D-aspartyl protein methyltransferase family.

Its subcellular location is the cytoplasm. The enzyme catalyses [protein]-L-isoaspartate + S-adenosyl-L-methionine = [protein]-L-isoaspartate alpha-methyl ester + S-adenosyl-L-homocysteine. Functionally, catalyzes the methyl esterification of L-isoaspartyl residues in peptides and proteins that result from spontaneous decomposition of normal L-aspartyl and L-asparaginyl residues. It plays a role in the repair and/or degradation of damaged proteins. The polypeptide is Protein-L-isoaspartate O-methyltransferase 1 (Anaeromyxobacter sp. (strain Fw109-5)).